The chain runs to 319 residues: Forkhead box protein E3 (319 aa).

Residues 1–69 are disordered; sequence MAGRSDMDPP…GRRRRRPLQR (69 aa). Over residues 44-53 the composition is skewed to low complexity; it reads AAAGRGEAAP. A DNA-binding region (fork-head) is located at residues 71-165; sequence KPPYSYIALI…DNGSFLRRRK (95 aa).

The protein resides in the nucleus. Transcription factor that controls lens epithelial cell growth through regulation of proliferation, apoptosis and cell cycle. During lens development, controls the ratio of the lens fiber cells to the cells of the anterior lens epithelium by regulating the rate of proliferation and differentiation. Controls lens vesicle closure and subsequent separation of the lens vesicle from ectoderm. Controls the expression of DNAJB1 in a pathway that is crucial for the development of the anterior segment of the eye. This is Forkhead box protein E3 (FOXE3) from Homo sapiens (Human).